We begin with the raw amino-acid sequence, 192 residues long: dTTP/UTP pyrophosphatase (192 aa).

Residue aspartate 75 is the Proton acceptor of the active site.

It belongs to the Maf family. YhdE subfamily. The cofactor is a divalent metal cation.

The protein resides in the cytoplasm. It carries out the reaction dTTP + H2O = dTMP + diphosphate + H(+). The catalysed reaction is UTP + H2O = UMP + diphosphate + H(+). Its function is as follows. Nucleoside triphosphate pyrophosphatase that hydrolyzes dTTP and UTP. May have a dual role in cell division arrest and in preventing the incorporation of modified nucleotides into cellular nucleic acids. This Bdellovibrio bacteriovorus (strain ATCC 15356 / DSM 50701 / NCIMB 9529 / HD100) protein is dTTP/UTP pyrophosphatase.